A 447-amino-acid polypeptide reads, in one-letter code: tRNA-2-methylthio-N(6)-dimethylallyladenosine synthase (447 aa).

The region spanning 10 to 128 is the MTTase N-terminal domain; it reads KLFCISTYGC…FPEYLHRVLQ (119 aa). The [4Fe-4S] cluster site is built by Cys19, Cys55, Cys89, Cys165, Cys169, and Cys172. Residues 151 to 382 enclose the Radical SAM core domain; the sequence is RKSDVKAFVT…EAINKKVVIK (232 aa). Positions 384 to 447 constitute a TRAM domain; sequence KEYEGKVVEV…PFSLIGEIVE (64 aa).

This sequence belongs to the methylthiotransferase family. MiaB subfamily. Monomer. Requires [4Fe-4S] cluster as cofactor.

Its subcellular location is the cytoplasm. It carries out the reaction N(6)-dimethylallyladenosine(37) in tRNA + (sulfur carrier)-SH + AH2 + 2 S-adenosyl-L-methionine = 2-methylsulfanyl-N(6)-dimethylallyladenosine(37) in tRNA + (sulfur carrier)-H + 5'-deoxyadenosine + L-methionine + A + S-adenosyl-L-homocysteine + 2 H(+). In terms of biological role, catalyzes the methylthiolation of N6-(dimethylallyl)adenosine (i(6)A), leading to the formation of 2-methylthio-N6-(dimethylallyl)adenosine (ms(2)i(6)A) at position 37 in tRNAs that read codons beginning with uridine. The polypeptide is tRNA-2-methylthio-N(6)-dimethylallyladenosine synthase (Clostridium perfringens (strain ATCC 13124 / DSM 756 / JCM 1290 / NCIMB 6125 / NCTC 8237 / Type A)).